A 362-amino-acid polypeptide reads, in one-letter code: Probable dual-specificity RNA methyltransferase RlmN (362 aa).

Glu105 acts as the Proton acceptor in catalysis. The region spanning 111 to 344 (HEYGNSICVT…VTIRREQGHD (234 aa)) is the Radical SAM core domain. Cys118 and Cys349 are oxidised to a cystine. [4Fe-4S] cluster-binding residues include Cys125, Cys129, and Cys132. S-adenosyl-L-methionine contacts are provided by residues 175 to 176 (GE), Ser207, 230 to 232 (SLH), and Asn306. Cys349 acts as the S-methylcysteine intermediate in catalysis.

This sequence belongs to the radical SAM superfamily. RlmN family. The cofactor is [4Fe-4S] cluster.

It localises to the cytoplasm. The catalysed reaction is adenosine(2503) in 23S rRNA + 2 reduced [2Fe-2S]-[ferredoxin] + 2 S-adenosyl-L-methionine = 2-methyladenosine(2503) in 23S rRNA + 5'-deoxyadenosine + L-methionine + 2 oxidized [2Fe-2S]-[ferredoxin] + S-adenosyl-L-homocysteine. It catalyses the reaction adenosine(37) in tRNA + 2 reduced [2Fe-2S]-[ferredoxin] + 2 S-adenosyl-L-methionine = 2-methyladenosine(37) in tRNA + 5'-deoxyadenosine + L-methionine + 2 oxidized [2Fe-2S]-[ferredoxin] + S-adenosyl-L-homocysteine. Functionally, specifically methylates position 2 of adenine 2503 in 23S rRNA and position 2 of adenine 37 in tRNAs. The sequence is that of Probable dual-specificity RNA methyltransferase RlmN from Bacillus anthracis (strain CDC 684 / NRRL 3495).